The sequence spans 333 residues: Glycerol-3-phosphate dehydrogenase [NAD(P)+] (333 aa).

W13, K33, and K108 together coordinate NADPH. Positions 108 and 138 each coordinate sn-glycerol 3-phosphate. S142 lines the NADPH pocket. K193, D246, S256, R257, and N258 together coordinate sn-glycerol 3-phosphate. The active-site Proton acceptor is K193. NADPH is bound at residue R257. The NADPH site is built by V281 and E283.

Belongs to the NAD-dependent glycerol-3-phosphate dehydrogenase family.

It localises to the cytoplasm. It catalyses the reaction sn-glycerol 3-phosphate + NAD(+) = dihydroxyacetone phosphate + NADH + H(+). The catalysed reaction is sn-glycerol 3-phosphate + NADP(+) = dihydroxyacetone phosphate + NADPH + H(+). It participates in membrane lipid metabolism; glycerophospholipid metabolism. Its function is as follows. Catalyzes the reduction of the glycolytic intermediate dihydroxyacetone phosphate (DHAP) to sn-glycerol 3-phosphate (G3P), the key precursor for phospholipid synthesis. This Bifidobacterium longum subsp. infantis (strain ATCC 15697 / DSM 20088 / JCM 1222 / NCTC 11817 / S12) protein is Glycerol-3-phosphate dehydrogenase [NAD(P)+].